Consider the following 308-residue polypeptide: MAQLRELRNRIRSVKSTRKITKAQELIATSRIMKAQARVEASRPYADEITNVLTALADASTLDHPLLTERENPKRAGVLVVTSDRGFCGGYNANVLRAAEELQTLLREQGKTPVLYVVGRKGEAYYRFRQREIAKSWTGFTDRPDYSDAADIGETLVKAFLAGADDYLDDGGPDGTLGVDELHLVHTEFVSMITQKPSVKRVAPLEVEYSEEPQKTLRPVYDFEPDADTLFKALLPKYINTRLFAGLLDAAASEHAARRTAMKSATDNADEIIRTLSREANQARQAQITQEISEIVGGVEALSSAGSE.

This sequence belongs to the ATPase gamma chain family. As to quaternary structure, F-type ATPases have 2 components, CF(1) - the catalytic core - and CF(0) - the membrane proton channel. CF(1) has five subunits: alpha(3), beta(3), gamma(1), delta(1), epsilon(1). CF(0) has three main subunits: a, b and c.

The protein resides in the cell membrane. Functionally, produces ATP from ADP in the presence of a proton gradient across the membrane. The gamma chain is believed to be important in regulating ATPase activity and the flow of protons through the CF(0) complex. The sequence is that of ATP synthase gamma chain from Saccharopolyspora erythraea (strain ATCC 11635 / DSM 40517 / JCM 4748 / NBRC 13426 / NCIMB 8594 / NRRL 2338).